The following is a 183-amino-acid chain: Inner membrane-spanning protein YciB (183 aa).

5 helical membrane-spanning segments follow: residues 19–39 (LYGVQQAAITLVIATVIQLIV), 53–73 (IMGIFVVFFGILTAYFNDLNF), 76–96 (WKVTIINGLFAAVLLVSQFVF), 121–141 (LGWAGFFIICMLLNIVISYYF), and 151–171 (TFGFTGLSLIAAIATGVYLYP).

The protein belongs to the YciB family.

The protein resides in the cell inner membrane. In terms of biological role, plays a role in cell envelope biogenesis, maintenance of cell envelope integrity and membrane homeostasis. This is Inner membrane-spanning protein YciB from Actinobacillus pleuropneumoniae serotype 3 (strain JL03).